Here is a 781-residue protein sequence, read N- to C-terminus: N-acetylneuraminate (7)9-O-acetyltransferase (781 aa).

The Cytoplasmic segment spans residues 1-15; the sequence is MAVLAYNLGKREINQ. The helical transmembrane segment at 16-36 threads the bilayer; it reads YFSIKNAKLLAAAAVVLLTVF. Residues 37-308 are Lumenal-facing; that stretch reads HAASRHYGSS…SAPPLSVLQK (272 aa). Ser94 serves as the catalytic Acyl-ester intermediate. 3 N-linked (GlcNAc...) asparagine glycosylation sites follow: Asn139, Asn185, and Asn239. Active-site residues include Asp264 and His267. The chain crosses the membrane as a helical span at residues 309–329; the sequence is LAAAVLLVSVVCFVLLGFSSH. Residues 330–350 are disordered; sequence RKSRPAPDVESGEEKKHPAAV. Topologically, residues 330–354 are cytoplasmic; the sequence is RKSRPAPDVESGEEKKHPAAVGQLN. The chain crosses the membrane as a helical span at residues 355–375; it reads PKGPLLAIGKMSLIMLYFYLC. Topologically, residues 376 to 386 are lumenal; it reads DRADIFMKEQK. Residues 387–407 traverse the membrane as a helical segment; sequence FYTHSAFFIPLIYIFVLGVFY. The Cytoplasmic portion of the chain corresponds to 408–430; that stretch reads SENSKETKLLNREQTDEWKGWMQ. Residues 431–451 traverse the membrane as a helical segment; sequence LVILIYHISGASAFIPVYMHV. Residue Arg452 is a topological domain, lumenal. The helical transmembrane segment at 453–473 threads the bilayer; sequence VLVAAYLFQTGYGHFSFFWLK. The Cytoplasmic portion of the chain corresponds to 474–477; sequence GDFG. A helical transmembrane segment spans residues 478-498; it reads LYRVCQVLFRLNFLVVVLCLV. At 499-504 the chain is on the lumenal side; it reads MDRPYQ. A helical membrane pass occupies residues 505-525; sequence FYYFVPLVTFWFAVIYATMAL. Over 526–537 the chain is Cytoplasmic; the sequence is WPQILQKQANGS. A helical transmembrane segment spans residues 538–558; sequence AFWNLALLLKLLGLLLFIGFF. The Lumenal portion of the chain corresponds to 559 to 595; sequence AYSQELFEGIFSVWPLSKLFELQGSIHEWWFRWKLDR. The helical transmembrane segment at 596–616 threads the bilayer; the sequence is FAVVNGMLFAFIYLLLQKYQL. Residues 617–629 lie on the Cytoplasmic side of the membrane; it reads LSEGKGEPLFSNK. A helical membrane pass occupies residues 630 to 650; it reads ISNCLLFVSVVSFMTYSIWAS. Residues 651–660 are Lumenal-facing; it reads GCKNKSECNE. Residue Asn654 is glycosylated (N-linked (GlcNAc...) asparagine). Residues 661 to 681 form a helical membrane-spanning segment; that stretch reads MHPYISVILAFILIRNIPGYA. The Cytoplasmic portion of the chain corresponds to 682–687; it reads RSLYSS. The chain crosses the membrane as a helical span at residues 688-708; the sequence is FFAWFGKISLELFICQYHIWL. Topologically, residues 709–714 are lumenal; that stretch reads AADTKG. Residues 715–735 traverse the membrane as a helical segment; sequence ILVLIPGNPTLNIIVSTFIFV. Topologically, residues 736–756 are cytoplasmic; that stretch reads CVAHEISQITNDLAQVAIPKE. Residues 757-777 form a helical membrane-spanning segment; the sequence is SGPLLKRLLGAGVFLVLVLTL. Residues 778 to 781 lie on the Lumenal side of the membrane; it reads SQKD.

Belongs to the PC-esterase family. CASD1 subfamily.

It is found in the golgi apparatus membrane. It carries out the reaction CMP-N-acetyl-beta-neuraminate + acetyl-CoA = CMP-N-acetyl-9-O-acetyl-beta-neuraminate + CoA. The catalysed reaction is a ganglioside GD3 (d18:1(4E)) + acetyl-CoA = a ganglioside Ac-O-7-GD3(d18:1(4E)) + CoA. The enzyme catalyses CMP-N-acetyl-beta-neuraminate + acetyl-CoA = CMP-N-acetyl-7-O-acetyl-beta-neuraminate + CoA. Functionally, key enzyme in the biosynthesis of O-acetylated (O-Ac) sialoglycans such as gangliosides O-AcGD3 and O-AcGD2, which affect various processes such as cell-cell interactions, host-pathogen recognition. Catalyzes the transfer of an acetyl group from a donor, the acetyl-coenzyme-A molecule (acetyl-CoA), to the C7/8/9 OH-position of a sialic acid residue. The primary site of O-acetyl group transfer on sialic acid seems to depend on cell type and can be C7, from which the O-acetyl group could subsequently migrate to the C8 and then to the C9 position, or at C9 with possibility of migrating to the C8 and then to the C7 position. Together with ST8SIA1 (GD3 synthase) it increases the levels of ganglioside Ac-O-7-GD3. Can transfer the acetyl group from acetyl-CoA to free sialate (N-acetylneuraminate, Neu5Ac) in vitro, but has preferred substrate specificity for CMP-activated sialate (CMP-Neu5Ac), resulting in the formation of 9-O-acetylated CMP-Neu5Ac (CMP-Neu5,9Ac2). CMP-Neu5,9Ac2 may be used by sialyltransferases as a sialate donor for glycoconjugate acceptors such as ganglioside GD3. O-acetylation at position C9 of ganglioside GD3 can counteract the pro-apoptotic effects of the ganglioside GD3 in tumor cells. The sequence is that of N-acetylneuraminate (7)9-O-acetyltransferase from Danio rerio (Zebrafish).